The sequence spans 540 residues: Peptide chain release factor 3 (540 aa).

In terms of domain architecture, tr-type G spans 14–283 (ELRRNFAIIS…YFLNYALKPG (270 aa)). GTP-binding positions include 23 to 30 (SHPDAGKT), 91 to 95 (DTPGH), and 145 to 148 (NKLD).

The protein belongs to the TRAFAC class translation factor GTPase superfamily. Classic translation factor GTPase family. PrfC subfamily.

The protein localises to the cytoplasm. Increases the formation of ribosomal termination complexes and stimulates activities of RF-1 and RF-2. It binds guanine nucleotides and has strong preference for UGA stop codons. It may interact directly with the ribosome. The stimulation of RF-1 and RF-2 is significantly reduced by GTP and GDP, but not by GMP. This is Peptide chain release factor 3 from Trichormus variabilis (strain ATCC 29413 / PCC 7937) (Anabaena variabilis).